A 436-amino-acid polypeptide reads, in one-letter code: tRNA-2-methylthio-N(6)-dimethylallyladenosine synthase (436 aa).

In terms of domain architecture, MTTase N-terminal spans 5-121 (RKLFIKTYGC…LPDMLERTEG (117 aa)). Residues Cys-14, Cys-50, Cys-84, Cys-158, Cys-162, and Cys-165 each contribute to the [4Fe-4S] cluster site. The Radical SAM core domain maps to 144–373 (ALRGPTAFLT…LGEQQRAAQA (230 aa)). The TRAM domain maps to 373 to 435 (AAMVGRELGV…PNSLAGERIG (63 aa)).

It belongs to the methylthiotransferase family. MiaB subfamily. As to quaternary structure, monomer. Requires [4Fe-4S] cluster as cofactor.

The protein localises to the cytoplasm. It carries out the reaction N(6)-dimethylallyladenosine(37) in tRNA + (sulfur carrier)-SH + AH2 + 2 S-adenosyl-L-methionine = 2-methylsulfanyl-N(6)-dimethylallyladenosine(37) in tRNA + (sulfur carrier)-H + 5'-deoxyadenosine + L-methionine + A + S-adenosyl-L-homocysteine + 2 H(+). In terms of biological role, catalyzes the methylthiolation of N6-(dimethylallyl)adenosine (i(6)A), leading to the formation of 2-methylthio-N6-(dimethylallyl)adenosine (ms(2)i(6)A) at position 37 in tRNAs that read codons beginning with uridine. The sequence is that of tRNA-2-methylthio-N(6)-dimethylallyladenosine synthase from Cereibacter sphaeroides (strain ATCC 17025 / ATH 2.4.3) (Rhodobacter sphaeroides).